Consider the following 289-residue polypeptide: Protoheme IX farnesyltransferase 2 (289 aa).

Transmembrane regions (helical) follow at residues 1 to 21 (MIKP…FLLA), 28 to 48 (LTLM…GCGL), 76 to 96 (YSVL…LAIF), 100 to 120 (IALL…SLYM), 125 to 145 (VYGT…GYCA), 155 to 175 (VILL…IAIF), 199 to 219 (LHIV…PLAG), 221 to 241 (TGIA…GMAL), and 260 to 280 (CSIV…QLVV).

Belongs to the UbiA prenyltransferase family. Protoheme IX farnesyltransferase subfamily.

Its subcellular location is the cell inner membrane. The enzyme catalyses heme b + (2E,6E)-farnesyl diphosphate + H2O = Fe(II)-heme o + diphosphate. Its pathway is porphyrin-containing compound metabolism; heme O biosynthesis; heme O from protoheme: step 1/1. Its function is as follows. Converts heme B (protoheme IX) to heme O by substitution of the vinyl group on carbon 2 of heme B porphyrin ring with a hydroxyethyl farnesyl side group. The polypeptide is Protoheme IX farnesyltransferase 2 (Shewanella woodyi (strain ATCC 51908 / MS32)).